Consider the following 705-residue polypeptide: Probable cyclic nucleotide-gated ion channel 16 (705 aa).

Over 1 to 57 (MSNLHLYTSARFRNFPTTFSLRHHHNDPNNQRRRSIFSKLRDKTLDPGGDLITRWNH) the chain is Cytoplasmic. A helical transmembrane segment spans residues 58–78 (IFLITCLLALFLDPLYFYLPI). Residues 79-91 (VQAGTACMSIDVR) lie on the Extracellular side of the membrane. The helical transmembrane segment at 92 to 112 (FGIFVTCFRNLADLSFLIHIL) threads the bilayer. Topologically, residues 113–147 (LKFKTAFVSKSSRVFGRGELVMDRREIAIRYLKSE) are cytoplasmic. A helical membrane pass occupies residues 148-168 (FVIDLAATLPLPQIMIWFVIP). Residues 169-180 (NAGEFRYAAHQN) lie on the Extracellular side of the membrane. The chain crosses the membrane as a helical span at residues 181 to 201 (HTLSLIVLIQYVPRFLVMLPL). Topologically, residues 202–222 (NRRIIKATGVAAKTAWSGAAY) are cytoplasmic. Residues 223–243 (NLILYLLVSHVLGSVWYVLSI) form a helical membrane-spanning segment. Topologically, residues 244–353 (QRQHECWRRE…LAASTLSSET (110 aa)) are extracellular. The helical transmembrane segment at 354–374 (IFSCFICVAGLVFFSHLIGNV) threads the bilayer. The Cytoplasmic segment spans residues 375-705 (QNYLQSTTAR…MFKPEDPGFF (331 aa)). Residues 457 to 580 (FFAQ…HSKK) and E528 each bind a nucleoside 3',5'-cyclic phosphate. The interval 573–588 (FRRLHSKKLQHAFRYY) is calmodulin-binding. The region spanning 593–622 (RAWGTCFIQAAWRRYMKRKLAMELARQEEE) is the IQ domain. Disordered stretches follow at residues 636–655 (EEDM…SNNQ) and 672–705 (RGVL…PGFF). The segment covering 642–655 (SNNNNGDENSSNNQ) has biased composition (low complexity).

The protein belongs to the cyclic nucleotide-gated cation channel (TC 1.A.1.5) family. In terms of assembly, homotetramer or heterotetramer.

The protein resides in the cell membrane. Functionally, putative cyclic nucleotide-gated ion channel. This Arabidopsis thaliana (Mouse-ear cress) protein is Probable cyclic nucleotide-gated ion channel 16 (CNGC16).